The following is a 577-amino-acid chain: Dihydroxy-acid dehydratase (577 aa).

Basic and acidic residues predominate over residues 1–10 (MLKRSFDKSK). Residues 1-22 (MLKRSFDKSKLPSRHVTEGPSR) form a disordered region. Position 56 (Cys56) interacts with [2Fe-2S] cluster. Asp88 provides a ligand contact to Mg(2+). Position 129 (Cys129) interacts with [2Fe-2S] cluster. Residues Asp130 and Lys131 each coordinate Mg(2+). An N6-carboxylysine modification is found at Lys131. Cys201 provides a ligand contact to [2Fe-2S] cluster. Mg(2+) is bound at residue Glu453. The active-site Proton acceptor is the Ser479.

This sequence belongs to the IlvD/Edd family. In terms of assembly, homodimer. [2Fe-2S] cluster serves as cofactor. The cofactor is Mg(2+).

It carries out the reaction (2R)-2,3-dihydroxy-3-methylbutanoate = 3-methyl-2-oxobutanoate + H2O. It catalyses the reaction (2R,3R)-2,3-dihydroxy-3-methylpentanoate = (S)-3-methyl-2-oxopentanoate + H2O. It participates in amino-acid biosynthesis; L-isoleucine biosynthesis; L-isoleucine from 2-oxobutanoate: step 3/4. The protein operates within amino-acid biosynthesis; L-valine biosynthesis; L-valine from pyruvate: step 3/4. Its function is as follows. Functions in the biosynthesis of branched-chain amino acids. Catalyzes the dehydration of (2R,3R)-2,3-dihydroxy-3-methylpentanoate (2,3-dihydroxy-3-methylvalerate) into 2-oxo-3-methylpentanoate (2-oxo-3-methylvalerate) and of (2R)-2,3-dihydroxy-3-methylbutanoate (2,3-dihydroxyisovalerate) into 2-oxo-3-methylbutanoate (2-oxoisovalerate), the penultimate precursor to L-isoleucine and L-valine, respectively. The chain is Dihydroxy-acid dehydratase from Dinoroseobacter shibae (strain DSM 16493 / NCIMB 14021 / DFL 12).